Here is a 302-residue protein sequence, read N- to C-terminus: Oxygen-dependent coproporphyrinogen-III oxidase (302 aa).

Ser94 contacts substrate. The a divalent metal cation site is built by His98 and His108. Residue His108 is the Proton donor of the active site. 110–112 (NVR) serves as a coordination point for substrate. A divalent metal cation contacts are provided by His147 and His177. The segment at 242-277 (YVEFNLVWDRGTLFGLQTGGRTESILMSMPPLVRWE) is important for dimerization. 260 to 262 (GGR) serves as a coordination point for substrate.

The protein belongs to the aerobic coproporphyrinogen-III oxidase family. Homodimer. A divalent metal cation is required as a cofactor.

The protein localises to the cytoplasm. It carries out the reaction coproporphyrinogen III + O2 + 2 H(+) = protoporphyrinogen IX + 2 CO2 + 2 H2O. The protein operates within porphyrin-containing compound metabolism; protoporphyrin-IX biosynthesis; protoporphyrinogen-IX from coproporphyrinogen-III (O2 route): step 1/1. Functionally, involved in the heme biosynthesis. Catalyzes the aerobic oxidative decarboxylation of propionate groups of rings A and B of coproporphyrinogen-III to yield the vinyl groups in protoporphyrinogen-IX. The sequence is that of Oxygen-dependent coproporphyrinogen-III oxidase from Erwinia tasmaniensis (strain DSM 17950 / CFBP 7177 / CIP 109463 / NCPPB 4357 / Et1/99).